The following is a 107-amino-acid chain: Essential MCU regulator, mitochondrial (107 aa).

The transit peptide at 1–52 directs the protein to the mitochondrion; that stretch reads MASGAARWLVLAPVRSGALRSGPSLRKDGDVSAAWSGSGRSLVPSRSVIVTR. Positions 1–52 are interaction with MAIP1; the sequence is MASGAARWLVLAPVRSGALRSGPSLRKDGDVSAAWSGSGRSLVPSRSVIVTR. Residues 54 to 65 lie on the Mitochondrial matrix side of the membrane; that stretch reads GAILPKPVKMSF. A helical membrane pass occupies residues 66–85; that stretch reads GLLRVFSIVIPFLYVGTLIS. Positions 81 to 85 match the GXXXX[G/A/S] motif; sequence GTLIS. Over 86 to 107 the chain is Mitochondrial intermembrane; sequence KNFAALLEEHDIFVPEDDDDDD.

This sequence belongs to the SMDT1/EMRE family. Component of the uniplex complex, composed of MCU, EMRE/SMDT1, MICU1 and MICU2 (or MICU3) in a 4:4:1:1 stoichiometry. The number of EMRE/SMDT1 molecules is hovewer variable, ranging from 1 to 4 copies per uniplex complex, leading to uniplex complexes with distinct gatekeeping profiles. Interacts (via its C-terminal poly-Asp tail) with MCUR1; the interaction is direct. Unprocessed form interacts (via transit peptide) with MAIP1. Post-translationally, undergoes proteolytic degradation in neurons: degraded by AFG3L2 and SPG7 before SMDT1/EMRE assembly with the uniporter complex, limiting the availability of SMDT1/EMRE for MCU assembly and promoting efficient assembly of gatekeeper subunits with MCU.

The protein resides in the mitochondrion inner membrane. In terms of biological role, essential regulatory subunit of the mitochondrial calcium uniporter complex (uniplex), a complex that mediates calcium uptake into mitochondria. Required to bridge the calcium-sensing proteins MICU1 with the calcium-conducting subunit MCU. Acts by mediating activation of MCU and retention of MICU1 to the MCU pore, in order to ensure tight regulation of the uniplex complex and appropriate responses to intracellular calcium signaling. This chain is Essential MCU regulator, mitochondrial, found in Homo sapiens (Human).